A 254-amino-acid polypeptide reads, in one-letter code: 3-beta-hydroxysteroid dehydrogenase (254 aa).

NAD(+) contacts are provided by residues Val12 to Asn40 and Asp61. Ser139 provides a ligand contact to substrate. Tyr152 functions as the Proton acceptor in the catalytic mechanism. Residue Lys156 coordinates NAD(+).

Belongs to the short-chain dehydrogenases/reductases (SDR) family. Homotetramer.

It catalyses the reaction testosterone + NAD(+) = androst-4-ene-3,17-dione + NADH + H(+). The catalysed reaction is testosterone + NADP(+) = androst-4-ene-3,17-dione + NADPH + H(+). This chain is 3-beta-hydroxysteroid dehydrogenase, found in Comamonas testosteroni (Pseudomonas testosteroni).